The sequence spans 606 residues: CDPK-related kinase 8 (606 aa).

The span at 1–14 shows a compositional bias: polar residues; that stretch reads MGGCTSKPSTSSGR. A disordered region spans residues 1 to 132; it reads MGGCTSKPST…TEVPQREEEE (132 aa). The N-myristoyl glycine moiety is linked to residue glycine 2. Over residues 98–110 the composition is skewed to basic residues; that stretch reads KHIRAALRRRKGK. The 263-residue stretch at 150–412 folds into the Protein kinase domain; sequence VELGEEIGRG…ASQALMHPWI (263 aa). ATP contacts are provided by residues 156–164 and lysine 182; that span reads IGRGHFGYT. Aspartate 278 functions as the Proton acceptor in the catalytic mechanism. Residue serine 318 is modified to Phosphoserine. The segment at 418–448 is autoinhibitory domain; it reads DMNIPFDILIFRQMKAYLRSSSLRKAALRAL. A calmodulin binding (CaMBD) region spans residues 437 to 457; the sequence is SSSLRKAALRALSKTLIKDEI. EF-hand domains lie at 455-491, 492-527, 528-567, and 570-599; these read DEILYLKTQFSLLAPNKDGLITMDTIRMALASNATEA, MKESRIPEFLALLNGLQYRGMDFEEFCAAAINVHQH, ESLDCWEQSIRHAYELFDKNGNRAIVIEELASELGVGPSI, and HSVLHDWIRHTDGKLSFFGFVKLLHGVSVR. Ca(2+)-binding residues include asparagine 470, aspartate 472, glutamate 516, aspartate 545, asparagine 547, asparagine 549, glutamate 556, aspartate 581, and lysine 583. A Phosphoserine modification is found at serine 585.

This sequence belongs to the protein kinase superfamily. Ser/Thr protein kinase family. CDPK subfamily. As to quaternary structure, binds calmodulin (CaM) in a calcium-dependent manner. In terms of processing, autophosphorylated.

The protein resides in the membrane. It catalyses the reaction L-seryl-[protein] + ATP = O-phospho-L-seryl-[protein] + ADP + H(+). The enzyme catalyses L-threonyl-[protein] + ATP = O-phospho-L-threonyl-[protein] + ADP + H(+). Activated by calcium and calmodulin. Autophosphorylation may play an important role in the regulation of the kinase activity. May play a role in signal transduction pathways that involve calcium as a second messenger. The protein is CDPK-related kinase 8 (CRK8) of Arabidopsis thaliana (Mouse-ear cress).